Here is a 611-residue protein sequence, read N- to C-terminus: Dihydroxy-acid dehydratase (611 aa).

Mg(2+) is bound at residue Asp81. Position 122 (Cys122) interacts with [2Fe-2S] cluster. Positions 123 and 124 each coordinate Mg(2+). Lys124 carries the post-translational modification N6-carboxylysine. Cys195 lines the [2Fe-2S] cluster pocket. Glu491 is a Mg(2+) binding site. The active-site Proton acceptor is Ser517.

It belongs to the IlvD/Edd family. Homodimer. It depends on [2Fe-2S] cluster as a cofactor. Mg(2+) serves as cofactor.

The catalysed reaction is (2R)-2,3-dihydroxy-3-methylbutanoate = 3-methyl-2-oxobutanoate + H2O. It carries out the reaction (2R,3R)-2,3-dihydroxy-3-methylpentanoate = (S)-3-methyl-2-oxopentanoate + H2O. The protein operates within amino-acid biosynthesis; L-isoleucine biosynthesis; L-isoleucine from 2-oxobutanoate: step 3/4. It functions in the pathway amino-acid biosynthesis; L-valine biosynthesis; L-valine from pyruvate: step 3/4. Functionally, functions in the biosynthesis of branched-chain amino acids. Catalyzes the dehydration of (2R,3R)-2,3-dihydroxy-3-methylpentanoate (2,3-dihydroxy-3-methylvalerate) into 2-oxo-3-methylpentanoate (2-oxo-3-methylvalerate) and of (2R)-2,3-dihydroxy-3-methylbutanoate (2,3-dihydroxyisovalerate) into 2-oxo-3-methylbutanoate (2-oxoisovalerate), the penultimate precursor to L-isoleucine and L-valine, respectively. In Brucella canis (strain ATCC 23365 / NCTC 10854 / RM-666), this protein is Dihydroxy-acid dehydratase.